The primary structure comprises 397 residues: Xylose isomerase (397 aa).

Catalysis depends on residues His54 and Asp57. The Mg(2+) site is built by Glu181, Glu217, His220, Asp245, Asp255, Asp257, and Asp293.

This sequence belongs to the xylose isomerase family. Homotetramer. It depends on Mg(2+) as a cofactor.

It is found in the cytoplasm. The catalysed reaction is alpha-D-xylose = alpha-D-xylulofuranose. The protein is Xylose isomerase of Clavibacter michiganensis subsp. michiganensis (strain NCPPB 382).